Reading from the N-terminus, the 210-residue chain is DNA-directed RNA polymerase III subunit rpc31 (210 aa).

Ser103 carries the phosphoserine modification. The interval 151–210 (KDESSEAAHPNIEEEPDEGLEEEDEDFGDDDDNDYGENYFDNGEGDDYDDYDGDEGAIYE) is disordered. Composition is skewed to acidic residues over residues 163–185 (EEEP…DNDY) and 193–210 (GEGD…AIYE).

This sequence belongs to the eukaryotic RPC7 RNA polymerase subunit family. As to quaternary structure, component of the RNA polymerase III (Pol III) complex.

The protein resides in the cytoplasm. It is found in the nucleus. Functionally, DNA-dependent RNA polymerase catalyzes the transcription of DNA into RNA using the four ribonucleoside triphosphates as substrates. Specific peripheric component of RNA polymerase III which synthesizes small RNAs, such as 5S rRNA and tRNAs. In Schizosaccharomyces pombe (strain 972 / ATCC 24843) (Fission yeast), this protein is DNA-directed RNA polymerase III subunit rpc31 (rpc31).